Here is a 611-residue protein sequence, read N- to C-terminus: Leucine aminopeptidase 2 (611 aa).

Residues 135 to 137 and 265 to 270 contribute to the a peptide site; these read QCQ and PYGGME. Zn(2+) is bound at residue His-294. The active-site Proton acceptor is the Glu-295. The Zn(2+) site is built by His-298 and Glu-317. Catalysis depends on Tyr-383, which acts as the Proton donor.

It belongs to the peptidase M1 family. Requires Zn(2+) as cofactor.

It localises to the cytoplasm. The protein resides in the nucleus. The catalysed reaction is an epoxide + H2O = an ethanediol. In terms of biological role, aminopeptidase that preferentially cleaves di- and tripeptides. Also has low epoxide hydrolase activity (in vitro). Can hydrolyze the epoxide leukotriene LTA(4) but it forms preferentially 5,6-dihydroxy-7,9,11,14-eicosatetraenoic acid rather than the cytokine leukotriene B(4) as the product compared to the homologous mammalian enzyme (in vitro). This Chaetomium globosum (strain ATCC 6205 / CBS 148.51 / DSM 1962 / NBRC 6347 / NRRL 1970) (Soil fungus) protein is Leucine aminopeptidase 2.